Reading from the N-terminus, the 287-residue chain is Putative holocytochrome-c1 synthase (287 aa).

Over residues 1-12 (MRGFGSDSSQAS) the composition is skewed to polar residues. Disordered regions lie at residues 1-63 (MRGF…QPSS) and 81-100 (QSQSANSTQQAQPPKLSAPL). Composition is skewed to low complexity over residues 31–63 (QARAAQSASTSAAPALPQSVQVAPASQPSQPSS) and 81–92 (QSQSANSTQQAQ).

The protein belongs to the cytochrome c-type heme lyase family.

It is found in the mitochondrion inner membrane. The enzyme catalyses holo-[cytochrome c] = apo-[cytochrome c] + heme b. Probable lyase that catalyzes the covalent linking of the heme group to the cytochrome C apoprotein to produce the mature functional cytochrome. The polypeptide is Putative holocytochrome-c1 synthase (Chaetomium thermophilum (strain DSM 1495 / CBS 144.50 / IMI 039719) (Thermochaetoides thermophila)).